We begin with the raw amino-acid sequence, 520 residues long: Maturase K (520 aa).

Belongs to the intron maturase 2 family. MatK subfamily.

Its subcellular location is the plastid. It localises to the chloroplast. Its function is as follows. Usually encoded in the trnK tRNA gene intron. Probably assists in splicing its own and other chloroplast group II introns. This chain is Maturase K, found in Liriope muscari (Big blue lilyturf).